The following is a 506-amino-acid chain: Maturase K (506 aa).

The protein belongs to the intron maturase 2 family. MatK subfamily.

It localises to the plastid. The protein localises to the chloroplast. In terms of biological role, usually encoded in the trnK tRNA gene intron. Probably assists in splicing its own and other chloroplast group II introns. This Atractylodes lancea (Atractylodes japonica) protein is Maturase K.